Reading from the N-terminus, the 94-residue chain is Co-chaperonin GroES (94 aa).

This sequence belongs to the GroES chaperonin family. In terms of assembly, heptamer of 7 subunits arranged in a ring. Interacts with the chaperonin GroEL.

It is found in the cytoplasm. In terms of biological role, together with the chaperonin GroEL, plays an essential role in assisting protein folding. The GroEL-GroES system forms a nano-cage that allows encapsulation of the non-native substrate proteins and provides a physical environment optimized to promote and accelerate protein folding. GroES binds to the apical surface of the GroEL ring, thereby capping the opening of the GroEL channel. The polypeptide is Co-chaperonin GroES (Bacillus pumilus (strain SAFR-032)).